Here is a 261-residue protein sequence, read N- to C-terminus: Ribosomal RNA small subunit methyltransferase J (261 aa).

Residues Arg109–Asp110, Glu125–Arg126, and Asp179 each bind S-adenosyl-L-methionine.

Belongs to the methyltransferase superfamily. RsmJ family.

The protein localises to the cytoplasm. The catalysed reaction is guanosine(1516) in 16S rRNA + S-adenosyl-L-methionine = N(2)-methylguanosine(1516) in 16S rRNA + S-adenosyl-L-homocysteine + H(+). Functionally, specifically methylates the guanosine in position 1516 of 16S rRNA. This chain is Ribosomal RNA small subunit methyltransferase J, found in Pseudomonas paraeruginosa (strain DSM 24068 / PA7) (Pseudomonas aeruginosa (strain PA7)).